Here is a 77-residue protein sequence, read N- to C-terminus: UPF0401 protein c3666 (77 aa).

The protein belongs to the UPF0401 family.

The polypeptide is UPF0401 protein c3666 (Escherichia coli O6:H1 (strain CFT073 / ATCC 700928 / UPEC)).